A 184-amino-acid polypeptide reads, in one-letter code: CASP-like protein 1U2 (184 aa).

Residues 1–16 (MSYGCQVSDDEPNGSK) are Cytoplasmic-facing. Residues 17–37 (AVSLLLRLSTLALALTSAVVM) form a helical membrane-spanning segment. The Extracellular segment spans residues 38 to 62 (ATASECTVVQLNGVVATITYKDFPP). The chain crosses the membrane as a helical span at residues 63–83 (FVYLVGFNIAAAMLEAAAIYL). Residues 84-100 (RLSTGGGDDDDEGFKGK) lie on the Cytoplasmic side of the membrane. A helical membrane pass occupies residues 101–121 (LPGILLVVIDVAVQALVYTAT). The Extracellular portion of the chain corresponds to 122–153 (GGAFAAVSAYGPQINACGAGAGRFCGQVHQSK). The chain crosses the membrane as a helical span at residues 154 to 174 (LLSFAGSAAVGLAVVFRDVSL). Over 175 to 184 (PFSLWPTSSD) the chain is Cytoplasmic.

It belongs to the Casparian strip membrane proteins (CASP) family. Homodimer and heterodimers.

Its subcellular location is the cell membrane. This is CASP-like protein 1U2 from Oryza sativa subsp. japonica (Rice).